A 592-amino-acid chain; its full sequence is Putative uric acid sigma-54-dependent transcriptional regulator UacR (592 aa).

Positions 158–229 (ISKIFATMID…HMQHIVSWDD (72 aa)) constitute a PAS domain. The 231-residue stretch at 272–502 (LVGECRVMRQ…LSNLMEYLVN (231 aa)) folds into the Sigma-54 factor interaction domain. ATP contacts are provided by residues 300-307 (GESGTGKE) and 364-373 (ANTGTLFLDE). The segment at residues 567–585 (KQVADELGIGIATLYRKIK) is a DNA-binding region (H-T-H motif).

Its function is as follows. Essential for both formate-dependent and formate-independent uric acid degradation. May be directly involved in the transcription of uacF in response to hypoxanthine, xanthine, and uric acid. This Escherichia coli (strain K12) protein is Putative uric acid sigma-54-dependent transcriptional regulator UacR.